The sequence spans 400 residues: Peptidoglycan hydrolase FlgJ (400 aa).

2 disordered regions span residues 112–155 (KQGS…GRDD) and 204–229 (PAASRRGFSTDGVDSQGSRRIAQPPL). The segment at 238–400 (SADEFIATML…VAAAGTPPLG (163 aa)) is catalytic. Active-site residues include Glu-310 and Asp-335.

The protein in the N-terminal section; belongs to the FlgJ family. It in the C-terminal section; belongs to the glycosyl hydrolase 73 family.

The protein resides in the periplasm. Flagellum-specific muramidase which hydrolyzes the peptidoglycan layer to assemble the rod structure in the periplasmic space. This chain is Peptidoglycan hydrolase FlgJ (flgJ), found in Pseudomonas aeruginosa (strain ATCC 15692 / DSM 22644 / CIP 104116 / JCM 14847 / LMG 12228 / 1C / PRS 101 / PAO1).